The chain runs to 297 residues: uncharacterized protein (297 aa).

The region spanning 187 to 285 is the HTH araC/xylS-type domain; the sequence is EKLIATLHAS…GYAPSAVLKN (99 aa). 2 DNA-binding regions (H-T-H motif) span residues 204–225 and 252–275; these read ADMA…LRYT and VGEV…KHKF.

This is an uncharacterized protein from Escherichia coli (strain K12).